An 87-amino-acid polypeptide reads, in one-letter code: Acyl-CoA-binding protein (87 aa).

The ACB domain maps to 3 to 87 (LKEEFEEHAV…KVKQLLEESA (85 aa)). An acyl-CoA-binding positions include 30 to 34 (YGLYK), Lys-56, and Tyr-75.

It belongs to the ACBP family.

Binds medium- and long-chain acyl-CoA esters with very high affinity and may function as an intracellular carrier of acyl-CoA esters. The polypeptide is Acyl-CoA-binding protein (ACABP) (Fritillaria agrestis (Stinkbells)).